The primary structure comprises 470 residues: Uronate isomerase (470 aa).

Belongs to the metallo-dependent hydrolases superfamily. Uronate isomerase family.

It catalyses the reaction D-glucuronate = D-fructuronate. The enzyme catalyses aldehydo-D-galacturonate = keto-D-tagaturonate. It participates in carbohydrate metabolism; pentose and glucuronate interconversion. This is Uronate isomerase from Sphingopyxis alaskensis (strain DSM 13593 / LMG 18877 / RB2256) (Sphingomonas alaskensis).